The chain runs to 108 residues: UPF0102 protein Sputcn32_3693 (108 aa).

The protein belongs to the UPF0102 family.

The chain is UPF0102 protein Sputcn32_3693 from Shewanella putrefaciens (strain CN-32 / ATCC BAA-453).